The chain runs to 360 residues: Phenylalanine--tRNA ligase alpha subunit (360 aa).

Mg(2+) is bound at residue Glu-260.

This sequence belongs to the class-II aminoacyl-tRNA synthetase family. Phe-tRNA synthetase alpha subunit type 1 subfamily. As to quaternary structure, tetramer of two alpha and two beta subunits. Mg(2+) serves as cofactor.

It is found in the cytoplasm. It carries out the reaction tRNA(Phe) + L-phenylalanine + ATP = L-phenylalanyl-tRNA(Phe) + AMP + diphosphate + H(+). The protein is Phenylalanine--tRNA ligase alpha subunit of Sinorhizobium medicae (strain WSM419) (Ensifer medicae).